Here is a 253-residue protein sequence, read N- to C-terminus: uncharacterized protein (253 aa).

The NADP(+) site is built by Ile-17, Ser-36, Asp-62, Asn-89, Lys-123, Tyr-158, Lys-162, Val-191, and Thr-193. Tyr-158 serves as the catalytic Proton acceptor. The Lowers pKa of active site Tyr role is filled by Lys-162.

Belongs to the short-chain dehydrogenases/reductases (SDR) family.

It is found in the cytoplasm. It localises to the nucleus. This is an uncharacterized protein from Schizosaccharomyces pombe (strain 972 / ATCC 24843) (Fission yeast).